Reading from the N-terminus, the 428-residue chain is CinA-like protein (428 aa).

The protein belongs to the CinA family.

This is CinA-like protein from Chlorobium phaeovibrioides (strain DSM 265 / 1930) (Prosthecochloris vibrioformis (strain DSM 265)).